Reading from the N-terminus, the 756-residue chain is 1,4-alpha-glucan branching enzyme GlgB (756 aa).

Catalysis depends on Asp-425, which acts as the Nucleophile. Glu-478 (proton donor) is an active-site residue.

Belongs to the glycosyl hydrolase 13 family. GlgB subfamily. In terms of assembly, monomer.

It carries out the reaction Transfers a segment of a (1-&gt;4)-alpha-D-glucan chain to a primary hydroxy group in a similar glucan chain.. The protein operates within glycan biosynthesis; glycogen biosynthesis. In terms of biological role, catalyzes the formation of the alpha-1,6-glucosidic linkages in glycogen by scission of a 1,4-alpha-linked oligosaccharide from growing alpha-1,4-glucan chains and the subsequent attachment of the oligosaccharide to the alpha-1,6 position. This is 1,4-alpha-glucan branching enzyme GlgB from Cupriavidus necator (strain ATCC 17699 / DSM 428 / KCTC 22496 / NCIMB 10442 / H16 / Stanier 337) (Ralstonia eutropha).